The sequence spans 354 residues: Ornithine carbamoyltransferase, catabolic (354 aa).

Residues 67–70 (STRT), Gln-94, Arg-118, and 145–148 (HPTQ) contribute to the carbamoyl phosphate site. L-ornithine contacts are provided by residues Asn-177, Asp-241, and 245 to 246 (SM). Residues 284–285 (CL) and Arg-329 each bind carbamoyl phosphate.

It belongs to the aspartate/ornithine carbamoyltransferase superfamily. OTCase family.

The protein localises to the cytoplasm. It carries out the reaction carbamoyl phosphate + L-ornithine = L-citrulline + phosphate + H(+). The protein operates within amino-acid degradation; L-arginine degradation via ADI pathway; carbamoyl phosphate from L-arginine: step 2/2. In terms of biological role, reversibly catalyzes the transfer of the carbamoyl group from carbamoyl phosphate (CP) to the N(epsilon) atom of ornithine (ORN) to produce L-citrulline. This chain is Ornithine carbamoyltransferase, catabolic (arcB), found in Lactococcus lactis subsp. lactis (strain IL1403) (Streptococcus lactis).